A 1804-amino-acid polypeptide reads, in one-letter code: Obscurin-like protein 1 (1804 aa).

Ser-10 is subject to Phosphoserine. Ig-like domains are found at residues 12-100 (PCFL…AAVT), 128-225 (PKFL…ALLQ), 241-330 (PKPV…QTLS), and 339-425 (PRLR…ANVT). Residues 17 to 19 (FPR) are interaction with TTN. A disulfide bridge links Cys-33 with Cys-84. The interaction with TTN stretch occupies residues 85 to 94 (RARNAAGEAY). Residues Cys-149 and Cys-209 are joined by a disulfide bond. Residues 227-249 (HQPRESPPQDPDENPKPVLEPLK) form a disordered region. 2 disulfides stabilise this stretch: Cys-267–Cys-319 and Cys-362–Cys-412. The Fibronectin type-III domain occupies 517–615 (PPGPPVMVEM…FNGSAHLVPT (99 aa)). Ig-like domains lie at 720-800 (PQDK…FGVT), 804-891 (PPVH…FTVT), 902-982 (PSSE…FTIT), 986-1075 (PPVR…VTVT), 1078-1165 (PERI…FNVS), 1176-1261 (PEAA…FNVQ), 1266-1442 (PPVK…ARLS), 1536-1621 (PVTI…ARLT), 1625-1694 (REVS…EDTG), and 1702-1798 (PAQS…ADTQ). 8 disulfides stabilise this stretch: Cys-738–Cys-788, Cys-829–Cys-879, Cys-920–Cys-970, Cys-1011–Cys-1061, Cys-1103–Cys-1153, Cys-1195–Cys-1245, Cys-1289–Cys-1430, and Cys-1558–Cys-1608.

Component of the 3M complex, composed of core components CUL7, CCDC8 and OBSL1. Interacts with CCDC8. Interacts with CUL7; the interaction is direct. Interacts with FBXW8. Interacts (via N-terminal Ig-like domain) with TTN/titin (via C-terminal Ig-like domain); the interaction is direct.

It localises to the cytoplasm. Its subcellular location is the perinuclear region. The protein localises to the golgi apparatus. Its function is as follows. Core component of the 3M complex, a complex required to regulate microtubule dynamics and genome integrity. It is unclear how the 3M complex regulates microtubules, it could act by controlling the level of a microtubule stabilizer. Acts as a regulator of the Cul7-RING(FBXW8) ubiquitin-protein ligase, playing a critical role in the ubiquitin ligase pathway that regulates Golgi morphogenesis and dendrite patterning in brain. Required to localize CUL7 to the Golgi apparatus in neurons. The protein is Obscurin-like protein 1 (Obsl1) of Mus musculus (Mouse).